Consider the following 343-residue polypeptide: Heat-inducible transcription repressor HrcA (343 aa).

This sequence belongs to the HrcA family.

Functionally, negative regulator of class I heat shock genes (grpE-dnaK-dnaJ and groELS operons). Prevents heat-shock induction of these operons. The protein is Heat-inducible transcription repressor HrcA of Mycolicibacterium vanbaalenii (strain DSM 7251 / JCM 13017 / BCRC 16820 / KCTC 9966 / NRRL B-24157 / PYR-1) (Mycobacterium vanbaalenii).